A 110-amino-acid polypeptide reads, in one-letter code: UPF0060 membrane protein Veis_0342 (110 aa).

4 consecutive transmembrane segments (helical) span residues Val-8–Ile-28, Pro-33–Leu-53, Ala-63–Val-83, and Val-90–Ala-110.

Belongs to the UPF0060 family.

It localises to the cell inner membrane. The protein is UPF0060 membrane protein Veis_0342 of Verminephrobacter eiseniae (strain EF01-2).